Reading from the N-terminus, the 483-residue chain is Glutamyl-tRNA(Gln) amidotransferase subunit A (483 aa).

Residues lysine 76 and serine 151 each act as charge relay system in the active site. Residue serine 175 is the Acyl-ester intermediate of the active site.

It belongs to the amidase family. GatA subfamily. As to quaternary structure, heterotrimer of A, B and C subunits.

The catalysed reaction is L-glutamyl-tRNA(Gln) + L-glutamine + ATP + H2O = L-glutaminyl-tRNA(Gln) + L-glutamate + ADP + phosphate + H(+). Functionally, allows the formation of correctly charged Gln-tRNA(Gln) through the transamidation of misacylated Glu-tRNA(Gln) in organisms which lack glutaminyl-tRNA synthetase. The reaction takes place in the presence of glutamine and ATP through an activated gamma-phospho-Glu-tRNA(Gln). The polypeptide is Glutamyl-tRNA(Gln) amidotransferase subunit A (Coxiella burnetii (strain CbuK_Q154) (Coxiella burnetii (strain Q154))).